The sequence spans 149 residues: Endoribonuclease YbeY (149 aa).

3 residues coordinate Zn(2+): H101, H105, and H111.

The protein belongs to the endoribonuclease YbeY family. Zn(2+) is required as a cofactor.

It localises to the cytoplasm. Its function is as follows. Single strand-specific metallo-endoribonuclease involved in late-stage 70S ribosome quality control and in maturation of the 3' terminus of the 16S rRNA. This is Endoribonuclease YbeY from Thermotoga neapolitana (strain ATCC 49049 / DSM 4359 / NBRC 107923 / NS-E).